Reading from the N-terminus, the 160-residue chain is Afimbrial adhesin AFA-III (160 aa).

An N-terminal signal peptide occupies residues 1–21 (MKKLAIMAAASMVFAVSSAHA). The receptor-binding stretch occupies residues 22–75 (GFTPSGTTGTTKLTVTEECQVRVGDLTVAKTRGQLTDAAPIGPVTVQALGCNAR).

The protein belongs to the Dr-adhesin family.

The protein localises to the fimbrium. Functionally, hemagglutinins of uropathogenic E.coli mediate adherence to the upper urinary tract. These adhesins bind to the Dr blood group antigen and also agglutinate human erythrocytes in the presence of D-mannose (mannose-resistant hemagglutination (MRHA)). In Escherichia coli, this protein is Afimbrial adhesin AFA-III (afaE3).